A 785-amino-acid polypeptide reads, in one-letter code: Phenylalanine--tRNA ligase beta subunit (785 aa).

Positions 39–147 (FPIPRGVVFA…DALPPGTPLA (109 aa)) constitute a tRNA-binding domain. The region spanning 399-474 (KPPEAIPFRP…RIQGYETIPL (76 aa)) is the B5 domain. 4 residues coordinate Mg(2+): Asp452, Asp458, Glu461, and Glu462. One can recognise an FDX-ACB domain in the interval 688-780 (SRHPAAFRDL…ALRARGFGLR (93 aa)).

Belongs to the phenylalanyl-tRNA synthetase beta subunit family. Type 1 subfamily. Tetramer of two alpha and two beta subunits. Mg(2+) is required as a cofactor.

It localises to the cytoplasm. It carries out the reaction tRNA(Phe) + L-phenylalanine + ATP = L-phenylalanyl-tRNA(Phe) + AMP + diphosphate + H(+). This is Phenylalanine--tRNA ligase beta subunit from Thermus thermophilus (strain ATCC BAA-163 / DSM 7039 / HB27).